The following is a 20-amino-acid chain: 7.2 kDa cytotoxin RVV-7 (20 aa).

As to quaternary structure, monomer. Homodimerizes during storage at 30 degrees Celsius (observed after 3 days). In terms of tissue distribution, expressed by the venom gland.

It is found in the secreted. The protein resides in the target cell membrane. Functionally, this three-finger cytotoxin shows cytotoxicity and direct nephrotoxicity. The cytotoxicity has been observed on B16F10 melanoma cells (EC(50)=2.56 uM) and on kidney proximal tubular epithelium LLCPK1 cells (EC(50)=4.79 uM); it is due to necrotic cell death and not to apoptosis. Direct nephrotoxicity has been deduced from binding to LLCPK1 cell line and to kidney membranes. In addition, after intravenous injection into mice tail vein, the toxin principally accumulates in kidney, but only minimally in blood, liver and brain. The chain is 7.2 kDa cytotoxin RVV-7 from Daboia russelii (Russel's viper).